An 898-amino-acid polypeptide reads, in one-letter code: Putative aconitate hydratase, cytoplasmic (898 aa).

Substrate is bound by residues glutamine 90 and aspartate 209 to histidine 211. 3 residues coordinate [4Fe-4S] cluster: cysteine 441, cysteine 507, and cysteine 510. Substrate-binding positions include arginine 540, arginine 545, arginine 703, and serine 784–arginine 785.

Belongs to the aconitase/IPM isomerase family. [4Fe-4S] cluster is required as a cofactor.

The protein localises to the cytoplasm. The catalysed reaction is citrate = D-threo-isocitrate. Its pathway is carbohydrate metabolism; glyoxylate and dicarboxylate metabolism. Catalyzes the isomerization of citrate to isocitrate via cis-aconitate. The chain is Putative aconitate hydratase, cytoplasmic from Oryza sativa subsp. japonica (Rice).